The sequence spans 356 residues: Probable neutral protease 2 homolog ARB_04769 (356 aa).

The N-terminal stretch at 1 to 17 (MQFTALLAALGAPLALA) is a signal peptide. The propeptide occupies 18-183 (ASIPAAAHNH…DDSTGVIDKR (166 aa)). 2 disulfide bridges follow: Cys-191–Cys-262 and Cys-269–Cys-287. N-linked (GlcNAc...) asparagine glycosylation occurs at Asn-205. A Zn(2+)-binding site is contributed by His-311. Glu-312 is an active-site residue. His-315 and Asp-326 together coordinate Zn(2+).

Belongs to the peptidase M35 family. Zn(2+) is required as a cofactor.

It is found in the secreted. The catalysed reaction is Preferential cleavage of bonds with hydrophobic residues in P1'. Also 3-Asn-|-Gln-4 and 8-Gly-|-Ser-9 bonds in insulin B chain.. Probable secreted metalloprotease that shows high activities on basic nuclear substrates such as histone and protamine. May be involved in virulence. The protein is Probable neutral protease 2 homolog ARB_04769 of Arthroderma benhamiae (strain ATCC MYA-4681 / CBS 112371) (Trichophyton mentagrophytes).